The chain runs to 55 residues: Large ribosomal subunit protein bL33 (55 aa).

The protein belongs to the bacterial ribosomal protein bL33 family.

The protein is Large ribosomal subunit protein bL33 of Polaromonas sp. (strain JS666 / ATCC BAA-500).